The sequence spans 104 residues: MTTETLVSGTTPVSDNANLKQHLTTPTQEGQTLRDSVEKALHNYFAHLEGQPVTDVYNMVLCEVEAPLLETVMNHVKGNQTKASELLGLNRGTLRKKLKQYDLL.

Positions 80–99 (QTKASELLGLNRGTLRKKLK) form a DNA-binding region, H-T-H motif.

The protein belongs to the transcriptional regulatory Fis family.

The chain is Putative Fis-like DNA-binding protein from Pseudomonas aeruginosa (strain ATCC 15692 / DSM 22644 / CIP 104116 / JCM 14847 / LMG 12228 / 1C / PRS 101 / PAO1).